The sequence spans 523 residues: Maintenance of mitochondrial morphology protein 1 (523 aa).

The Lumenal portion of the chain corresponds to 1–43 (MAGSTSASLQTPYFPSSTQINPVRVDHTLPLPPSQPSLSFTQG). The helical transmembrane segment at 44–64 (LLVGQLSVVLLIGAFIKFFIF) threads the bilayer. Residues 65 to 523 (GEAPPPPSRG…GSMPDTVTET (459 aa)) lie on the Cytoplasmic side of the membrane. Disordered stretches follow at residues 70–118 (PPSR…SSST), 128–147 (YYSATPTHPTPKHGRPRLYH), 295–349 (TSDQ…SKHG), 420–474 (RTGL…DRGL), and 492–523 (GGHQNQSGRDGGRGGNEQFAMPGSMPDTVTET). 2 stretches are compositionally biased toward polar residues: residues 74-96 (GLSNRTSTHPRSYSINAASTDSS) and 105-118 (STSNILRPVPSSST). Residues 137-147 (TPKHGRPRLYH) show a composition bias toward basic residues. Residues 151–412 (QPESLDWFNV…EPRVQVVGLP (262 aa)) form the SMP-LTD domain. Residues 295–312 (TSDQTMSPIPTPHDTTSE) show a composition bias toward polar residues. Over residues 449 to 468 (GVSGGGGSGGGSGGGGGGMR) the composition is skewed to gly residues.

It belongs to the MMM1 family. As to quaternary structure, homodimer. Component of the ER-mitochondria encounter structure (ERMES) or MDM complex, composed of MMM1, MDM10, MDM12 and MDM34. An MMM1 homodimer associates with one molecule of MDM12 on each side in a pairwise head-to-tail manner, and the SMP-LTD domains of MMM1 and MDM12 generate a continuous hydrophobic tunnel for phospholipid trafficking.

The protein resides in the endoplasmic reticulum membrane. Functionally, component of the ERMES/MDM complex, which serves as a molecular tether to connect the endoplasmic reticulum (ER) and mitochondria. Components of this complex are involved in the control of mitochondrial shape and protein biogenesis, and function in nonvesicular lipid trafficking between the ER and mitochondria. The MDM12-MMM1 subcomplex functions in the major beta-barrel assembly pathway that is responsible for biogenesis of all outer membrane beta-barrel proteins, and acts in a late step after the SAM complex. The MDM10-MDM12-MMM1 subcomplex further acts in the TOM40-specific pathway after the action of the MDM12-MMM1 complex. Essential for establishing and maintaining the structure of mitochondria and maintenance of mtDNA nucleoids. The protein is Maintenance of mitochondrial morphology protein 1 of Paracoccidioides lutzii (strain ATCC MYA-826 / Pb01) (Paracoccidioides brasiliensis).